We begin with the raw amino-acid sequence, 278 residues long: ABC transporter I family member 11, chloroplastic (278 aa).

Residues 1 to 49 (MAVSTFSSPTPVFGIAEPPASFSSTAIGWKQPLRFRRTKKPRVISCDYS) constitute a chloroplast transit peptide. Residues 51–278 (IEVRDVCYRP…GVLVAERPPL (228 aa)) form the ABC transporter domain. An ATP-binding site is contributed by 85-92 (GKSGSGKT).

It belongs to the ABC transporter superfamily. ABCI family.

The protein localises to the plastid. The protein resides in the chloroplast. This is ABC transporter I family member 11, chloroplastic (ABCI11) from Arabidopsis thaliana (Mouse-ear cress).